The primary structure comprises 219 residues: 2-hydroxy-3-keto-5-methylthiopentenyl-1-phosphate phosphatase (219 aa).

It belongs to the HAD-like hydrolase superfamily. MtnX family.

It carries out the reaction 2-hydroxy-5-methylsulfanyl-3-oxopent-1-enyl phosphate + H2O = 1,2-dihydroxy-5-(methylsulfanyl)pent-1-en-3-one + phosphate. It functions in the pathway amino-acid biosynthesis; L-methionine biosynthesis via salvage pathway; L-methionine from S-methyl-5-thio-alpha-D-ribose 1-phosphate: step 4/6. In terms of biological role, dephosphorylates 2-hydroxy-3-keto-5-methylthiopentenyl-1-phosphate (HK-MTPenyl-1-P) yielding 1,2-dihydroxy-3-keto-5-methylthiopentene (DHK-MTPene). The chain is 2-hydroxy-3-keto-5-methylthiopentenyl-1-phosphate phosphatase from Exiguobacterium sibiricum (strain DSM 17290 / CCUG 55495 / CIP 109462 / JCM 13490 / 255-15).